Reading from the N-terminus, the 195-residue chain is Probable nicotinate-nucleotide adenylyltransferase (195 aa).

It belongs to the NadD family.

It catalyses the reaction nicotinate beta-D-ribonucleotide + ATP + H(+) = deamido-NAD(+) + diphosphate. Its pathway is cofactor biosynthesis; NAD(+) biosynthesis; deamido-NAD(+) from nicotinate D-ribonucleotide: step 1/1. Catalyzes the reversible adenylation of nicotinate mononucleotide (NaMN) to nicotinic acid adenine dinucleotide (NaAD). The chain is Probable nicotinate-nucleotide adenylyltransferase from Mesorhizobium japonicum (strain LMG 29417 / CECT 9101 / MAFF 303099) (Mesorhizobium loti (strain MAFF 303099)).